Consider the following 200-residue polypeptide: THO complex subunit tho5 (200 aa).

Belongs to the THOC5 family. Component of the THO and TREX complexes.

The protein localises to the cytoplasm. It is found in the nucleus. Functionally, component the THO subcomplex of the TREX complex, which operates in coupling transcription elongation to mRNA export. The THO complex is recruited to transcribed genes and moves along the gene with the elongating polymerase during transcription. THO is important for stabilizing nascent RNA in the RNA polymerase II elongation complex by preventing formation of DNA:RNA hybrids behind the elongating polymerase. The THO complex is also required to maintain TRAMP complex occupancy at sites of snoRNA transcription thus promoting exosome-mediated degradation of snoRNA precursors. This chain is THO complex subunit tho5, found in Schizosaccharomyces pombe (strain 972 / ATCC 24843) (Fission yeast).